We begin with the raw amino-acid sequence, 357 residues long: Isoflavone 7-O-methyltransferase (357 aa).

S-adenosyl-L-methionine-binding positions include 200-203 (VGGG), aspartate 224, 224-225 (DR), 244-245 (DM), and lysine 258. Catalysis depends on histidine 262, which acts as the Proton acceptor.

The protein belongs to the class I-like SAM-binding methyltransferase superfamily. Cation-independent O-methyltransferase family. COMT subfamily.

The enzyme catalyses a 7-hydroxyisoflavone + S-adenosyl-L-methionine = a 7-methoxyisoflavone + S-adenosyl-L-homocysteine + H(+). In terms of biological role, 7-O-methyltransferase involved in the biosynthesis of isoformononetin. Can use daidzein as substrate, but not medicarpin or 2,7,4'-trihydroxyisoflavanone. In Glycyrrhiza echinata (Licorice), this protein is Isoflavone 7-O-methyltransferase (D7OMT).